A 293-amino-acid chain; its full sequence is 2-pyrone-4,6-dicarboxylate hydrolase (293 aa).

The disordered stretch occupies residues 1–20 (MTNDERILSWNETPSKPRYT). Residues 29 to 31 (HCH), Tyr-47, Ser-75, Arg-122, Arg-128, Tyr-154, and His-178 each bind substrate. Asp-246 serves as the catalytic Proton acceptor. Residue Asn-251 participates in substrate binding.

Belongs to the metallo-dependent hydrolases superfamily. PDC hydrolase family. In terms of assembly, monomer.

The catalysed reaction is 2-oxo-2H-pyran-4,6-dicarboxylate + H2O = (1E)-4-oxobut-1-ene-1,2,4-tricarboxylate + H(+). Its pathway is secondary metabolite metabolism; lignin degradation. With respect to regulation, strongly inhibited by 1 mM Zn(2+) ions. Also inhibited by pyridine-2,4-dicarboxylic acid, 5-hydroxyisophthalic acid and 5,5'-dithiobis(2-nitrobenzoic acid) (Ellman reagent). Contributes to the degradation of lignin at the level of the protocatechuate 4,5-cleavage pathway. Catalyzes the hydrolysis of 2-pyrone-4,6-dicarboxylate (PDC) to (4E)-oxalomesaconate (OMA). The keto form of OMA can tautomerize into the enol form, 4-carboxy-2-hydroxymuconate (CHM), under certain pH conditions. Also catalyzes the reverse reaction. Is essential for the growth of Sphingobium sp. SYK-6 on vanillate but is not responsible for the growth of this strain on syringate. The polypeptide is 2-pyrone-4,6-dicarboxylate hydrolase (Sphingobium sp. (strain NBRC 103272 / SYK-6)).